Consider the following 80-residue polypeptide: MEYASDQLLPRDMQILFPTIYCRLNAINYCQYLKTFLVQRAQPAACDHTLVLESKVDTVRQVLRKIVSTDAVFSEARARP.

The protein belongs to the herpesviridae TRM2 protein family. As to quaternary structure, associates with TRM1 and TRM3 to form the tripartite terminase complex.

The protein resides in the host nucleus. In terms of biological role, component of the molecular motor that translocates viral genomic DNA in empty capsid during DNA packaging. Forms a tripartite terminase complex together with TRM1 and TRM3 in the host cytoplasm. Once the complex reaches the host nucleus, it interacts with the capsid portal vertex. This portal forms a ring in which genomic DNA is translocated into the capsid. The polypeptide is Tripartite terminase subunit 2 (Homo sapiens (Human)).